A 182-amino-acid chain; its full sequence is Endoribonuclease YbeY (182 aa).

Residues histidine 115, histidine 119, and histidine 125 each contribute to the Zn(2+) site.

This sequence belongs to the endoribonuclease YbeY family. The cofactor is Zn(2+).

Its subcellular location is the cytoplasm. In terms of biological role, single strand-specific metallo-endoribonuclease involved in late-stage 70S ribosome quality control and in maturation of the 3' terminus of the 16S rRNA. In Bifidobacterium longum (strain NCC 2705), this protein is Endoribonuclease YbeY.